We begin with the raw amino-acid sequence, 381 residues long: Protein TRIGALACTOSYLDIACYLGLYCEROL 2, chloroplastic (381 aa).

Residues 1–45 constitute a chloroplast transit peptide; it reads MIGNPVIQVPSSLMPSSSMIACPRVSPNGVPYLPPKPRTRHLVVR. Residues 46–96 are Stromal-facing; it reads AASNSDAAHGQPSSDGGKNPLTVVLDVPRNIWRQTLKPLSDFGFGKRSIWE. The helical transmembrane segment at 97–117 threads the bilayer; that stretch reads GGVGLFIVSGATLLALSWAWL. Residues 118–381 lie on the Chloroplast intermembrane side of the membrane; the sequence is RGFQMRSKFR…LLIKSLSRLL (264 aa).

As to quaternary structure, homomultimer. Substrate-binding subunit of the TGD complex, a lipid translocator at the inner chloroplast envelope membrane made of TGD1, TGD2 and TGD3. Interacts with TGD1 and TGD3 with an overall subunit stoichiometry of 2 TGD1, 2 TGD3 and 8 to 12 TGD2. Interacts with TGD5.

Its subcellular location is the plastid. The protein resides in the chloroplast inner membrane. Its function is as follows. Component of a phosphatidic acid/lipid transport complex in the chloroplast envelope. Specifically binds phosphatidic acid (PA). Involved in lipid transfer from the endoplasmic reticulum (ER) to plastids, and necessary for thylakoids formation. This is Protein TRIGALACTOSYLDIACYLGLYCEROL 2, chloroplastic from Arabidopsis thaliana (Mouse-ear cress).